The chain runs to 460 residues: Sorting nexin-4 (460 aa).

The segment covering Met-1 to Trp-16 has biased composition (polar residues). Residues Met-1–Gly-53 form a disordered region. A PX domain is found at Lys-56–Ala-178. Coiled coils occupy residues Glu-238 to Ile-266, Arg-306 to Asn-337, and Gln-374 to Met-403.

It belongs to the sorting nexin family. As to quaternary structure, forms a complex with ATG20 and ATG17.

Its subcellular location is the cytoplasm. It localises to the membrane. The protein resides in the endosome membrane. In terms of biological role, sorting nexin involved in the separation or division of vacuoles throughout the entire life cycle of the cells. Involved in retrieval of late-Golgi SNAREs from post-Golgi endosomes to the trans-Golgi network, for cytoplasm to vacuole transport (Cvt), and autophagy of large cargos including mitophagy, pexophagy and glycophagy. Autophagy is required for proper vegetative growth, asexual/sexual reproduction, and full virulence. Autophagy is particularly involved in the biosynthesis of deoxynivalenol (DON), an important virulence determinant. The chain is Sorting nexin-4 from Gibberella zeae (strain ATCC MYA-4620 / CBS 123657 / FGSC 9075 / NRRL 31084 / PH-1) (Wheat head blight fungus).